A 346-amino-acid chain; its full sequence is Histidinol-phosphate aminotransferase (346 aa).

Lysine 209 bears the N6-(pyridoxal phosphate)lysine mark.

The protein belongs to the class-II pyridoxal-phosphate-dependent aminotransferase family. Histidinol-phosphate aminotransferase subfamily. In terms of assembly, homodimer. The cofactor is pyridoxal 5'-phosphate.

It catalyses the reaction L-histidinol phosphate + 2-oxoglutarate = 3-(imidazol-4-yl)-2-oxopropyl phosphate + L-glutamate. Its pathway is amino-acid biosynthesis; L-histidine biosynthesis; L-histidine from 5-phospho-alpha-D-ribose 1-diphosphate: step 7/9. The polypeptide is Histidinol-phosphate aminotransferase (Vibrio vulnificus (strain YJ016)).